Reading from the N-terminus, the 255-residue chain is Phosphate import ATP-binding protein PstB (255 aa).

Residues 8–250 (IKSSNLNVHY…PGNKMTQDYI (243 aa)) form the ABC transporter domain. 40-47 (GPSGCGKS) is a binding site for ATP.

This sequence belongs to the ABC transporter superfamily. Phosphate importer (TC 3.A.1.7) family. The complex is composed of two ATP-binding proteins (PstB), two transmembrane proteins (PstC and PstA) and a solute-binding protein (PstS).

It is found in the cell inner membrane. It catalyses the reaction phosphate(out) + ATP + H2O = ADP + 2 phosphate(in) + H(+). Functionally, part of the ABC transporter complex PstSACB involved in phosphate import. Responsible for energy coupling to the transport system. In Pelagibacter ubique (strain HTCC1062), this protein is Phosphate import ATP-binding protein PstB.